We begin with the raw amino-acid sequence, 2310 residues long: Retinal-specific phospholipid-transporting ATPase ABCA4 (2310 aa).

Residues 1-21 (MGFLRQIQLLLWKNWTLRKRQ) lie on the Cytoplasmic side of the membrane. Residues 22-42 (KIRFVVELVWPLSLFLVLIWL) traverse the membrane as a helical segment. Over 43–646 (RNANPLYSQH…MPYPCFVDDS (604 aa)) the chain is Extracellular. 2 cysteine pairs are disulfide-bonded: Cys-54–Cys-81 and Cys-75–Cys-324. Asn-98 is a glycosylation site (N-linked (GlcNAc...) asparagine). Residues Ser-336 and Asn-338 each coordinate Mg(2+). Cys-370 and Cys-519 are joined by a disulfide. N-linked (GlcNAc...) asparagine glycans are attached at residues Asn-415 and Asn-504. The an N-all-trans-retinylidenephosphatidylethanolamine site is built by Arg-587 and Arg-653. Intrachain disulfides connect Cys-641–Cys-1489, Cys-1443–Cys-1454, and Cys-1487–Cys-1501. A helical transmembrane segment spans residues 647 to 667 (FMIILNRCFPIFMVLAWIYSV). Residues 668-699 (SMTVKGIVLEKELRLKETLKNQGVSNAVIWCT) lie on the Cytoplasmic side of the membrane. The chain crosses the membrane as a helical span at residues 700–720 (WFLDSFSIMALSIFLLTLFIM). Over 721–730 (HGRILHYSDP) the chain is Extracellular. The helical transmembrane segment at 731 to 751 (FILFLFLLAFATATIMQSFLL) threads the bilayer. Topologically, residues 752–759 (STLFSKAS) are cytoplasmic. A helical transmembrane segment spans residues 760 to 780 (LAAACSGVIYFTLYLPHVLCF). Topologically, residues 781–835 (AWQDRMTADLKTTVSLLSSVAFGFGTEYLVRFEEQGLGLQWSNIGKSPLEGDEFS) are extracellular. Residues 836 to 856 (FLLSMKMMLLDAALYGLLAWY) traverse the membrane as a helical segment. Over 857-1375 (LDQVFPGDYG…IRSRKDFVAQ (519 aa)) the chain is Cytoplasmic. The interval 891–910 (ERALEKTEPLTEEMEDPEHP) is disordered. The residue at position 901 (Thr-901) is a Phosphothreonine. One can recognise an ABC transporter 1 domain in the interval 929–1160 (VCVKNLVKVF…FGTGFYLTLV (232 aa)). Residues Phe-938, Gly-966, and Lys-969 each coordinate ATP. A Mg(2+)-binding site is contributed by Thr-970. Positions 971, 1010, 1054, 1064, 1065, and 1118 each coordinate ATP. Ser-1185 is subject to Phosphoserine. The disordered stretch occupies residues 1311 to 1344 (RQYAQAPHTCSPGQVDPPKGQPSPEPEDPGVPFN). Residues 1376–1396 (IVLPATFVFLALMLSIIVPPF) traverse the membrane as a helical segment. Residues 1397 to 1726 (GEFPALTLHP…VSPTTYWLTN (330 aa)) are Extracellular-facing. N-linked (GlcNAc...) asparagine glycosylation occurs at Asn-1468. 3 N-linked (GlcNAc...) asparagine glycosylation sites follow: Asn-1528, Asn-1587, and Asn-1661. A helical transmembrane segment spans residues 1727–1747 (FLWDIMNYAVSAGLVVGIFIG). At 1748–1758 (FQKKAYTSPDN) the chain is on the cytoplasmic side. Residues 1759 to 1779 (LPALVSLLMLYGWAVIPMMYP) form a helical membrane-spanning segment. Residues 1780–1791 (ASFLFEVPSTAY) are Extracellular-facing. The chain crosses the membrane as a helical span at residues 1792–1812 (VALSCANLFIGINSSAITFVL). Topologically, residues 1813 to 1830 (ELFENNRTLLRFNAMLRK) are cytoplasmic. A helical transmembrane segment spans residues 1831–1851 (LLIVFPHFCLGRGLIDLALSQ). Over 1852-1872 (AVTDVYAQFGEEYSANPFQWD) the chain is Extracellular. The chain crosses the membrane as a helical span at residues 1873 to 1893 (LIGKNLVAMAIEGVVYFLLTL). Over 1894–2310 (LIQHHFFLTR…AEDKHTRSPQ (417 aa)) the chain is Cytoplasmic. The 233-residue stretch at 1937–2169 (LKLNELTKVY…FGDGYIVTMK (233 aa)) folds into the ABC transporter 2 domain. Residues Asn-1973, Gly-1974, Lys-1977, Thr-1978, Thr-1979, and Gly-2072 each contribute to the ATP site. Mg(2+) is bound at residue Thr-1978. An essential for ATP binding and ATPase activity region spans residues 2243-2248 (VFVNFA). Residues 2266–2310 (ASWQAKLEEKSGRLQTQEPLPAGSEQLANGSNPTAAEDKHTRSPQ) are disordered. Positions 2301 to 2310 (AEDKHTRSPQ) are enriched in basic and acidic residues.

The protein belongs to the ABC transporter superfamily. ABCA family. N-glycosylated. Post-translationally, proteolytic cleavage by trypsin leads to a 120-kDa N-terminal fragment and a 115-kDa C-terminal fragment that are linked through disulfide bonds. In terms of processing, phosphorylation is independent of light exposure and modulates ATPase activity. Retinal-specific. Seems to be exclusively found in the rims of rod photoreceptor cells.

It is found in the membrane. The protein resides in the endoplasmic reticulum. It localises to the cell projection. The protein localises to the cilium. Its subcellular location is the photoreceptor outer segment. The enzyme catalyses an N-all-trans-retinylidenephosphatidylethanolamine(out) + ATP + H2O = an N-all-trans-retinylidenephosphatidylethanolamine(in) + ADP + phosphate + H(+). It catalyses the reaction ATP + H2O + phospholipidSide 1 = ADP + phosphate + phospholipidSide 2.. It carries out the reaction a 1,2-diacyl-sn-glycero-3-phosphoethanolamine(out) + ATP + H2O = a 1,2-diacyl-sn-glycero-3-phosphoethanolamine(in) + ADP + phosphate + H(+). The catalysed reaction is N-11-cis-retinylidenephosphatidylethanolamine(out) + ATP + H2O = N-11-cis-retinylidenephosphatidylethanolamine(in) + ADP + phosphate + H(+). The enzyme catalyses ATP + H2O = ADP + phosphate + H(+). Its activity is regulated as follows. ATPase activity is decreased by cholesterol and ceramide. Phospholipids translocase activity is highly reduced by berylium fluoride and aluminum floride. N-ethylmaleimide inhibits phospholipid translocase activity. Flippase that catalyzes in an ATP-dependent manner the transport of retinal-phosphatidylethanolamine conjugates like the 11-cis and all-trans isomers of N-retinylidene-phosphatidylethanolamine from the lumen to the cytoplasmic leaflet of photoreceptor outer segment disk membranes, where N-cis-retinylidene-phosphatidylethanolamine (N-cis-R-PE) is then isomerized to its all-trans isomer (N-trans-R-PE) and reduced by RDH8 to produce all-trans-retinol (all-trans-rol) and therefore prevents the accumulation of excess of 11-cis-retinal and its schiff-base conjugate and the formation of toxic bisretinoid. Displays ATPase activity in vitro in absence of retinal substrate. May display GTPase activity that is strongly influenced by the lipid environment and the presence of retinoid compounds. Binds the unprotonated form of N-retinylidene-phosphatidylethanolamine with high affinity in the absence of ATP and ATP binding and hydrolysis induce a protein conformational change that causes the dissociation of N-retinylidene-phosphatidylethanolamine. This Mus musculus (Mouse) protein is Retinal-specific phospholipid-transporting ATPase ABCA4.